Here is a 152-residue protein sequence, read N- to C-terminus: Ribosome maturation factor RimP (152 aa).

The protein belongs to the RimP family.

The protein resides in the cytoplasm. Required for maturation of 30S ribosomal subunits. The protein is Ribosome maturation factor RimP of Desulfitobacterium hafniense (strain Y51).